Here is a 326-residue protein sequence, read N- to C-terminus: UDP-3-O-acylglucosamine N-acyltransferase (326 aa).

Residue His-233 is the Proton acceptor of the active site.

This sequence belongs to the transferase hexapeptide repeat family. LpxD subfamily. In terms of assembly, homotrimer.

It carries out the reaction a UDP-3-O-[(3R)-3-hydroxyacyl]-alpha-D-glucosamine + a (3R)-hydroxyacyl-[ACP] = a UDP-2-N,3-O-bis[(3R)-3-hydroxyacyl]-alpha-D-glucosamine + holo-[ACP] + H(+). It functions in the pathway bacterial outer membrane biogenesis; LPS lipid A biosynthesis. Its function is as follows. Catalyzes the N-acylation of UDP-3-O-acylglucosamine using 3-hydroxyacyl-ACP as the acyl donor. Is involved in the biosynthesis of lipid A, a phosphorylated glycolipid that anchors the lipopolysaccharide to the outer membrane of the cell. In Aquifex aeolicus (strain VF5), this protein is UDP-3-O-acylglucosamine N-acyltransferase.